Reading from the N-terminus, the 185-residue chain is Transcription termination/antitermination protein NusG (185 aa).

The KOW domain occupies 134–164 (VGKRVRIVDGAFSGFEAPITEINGDKLTLTV).

The protein belongs to the NusG family.

In terms of biological role, participates in transcription elongation, termination and antitermination. This is Transcription termination/antitermination protein NusG from Lactococcus lactis subsp. lactis (strain IL1403) (Streptococcus lactis).